The sequence spans 257 residues: Sulfur carrier protein FdhD (257 aa).

C105 acts as the Cysteine persulfide intermediate in catalysis.

This sequence belongs to the FdhD family.

The protein resides in the cytoplasm. Functionally, required for formate dehydrogenase (FDH) activity. Acts as a sulfur carrier protein that transfers sulfur from IscS to the molybdenum cofactor prior to its insertion into FDH. The polypeptide is Sulfur carrier protein FdhD (Saccharolobus solfataricus (strain ATCC 35092 / DSM 1617 / JCM 11322 / P2) (Sulfolobus solfataricus)).